The following is a 1079-amino-acid chain: Alpha-mannosidase C (1079 aa).

Positions 1–22 are cleaved as a signal peptide; it reads MFYKTFGFLFIYLIILISGTLS. Residues H44 and D46 each coordinate Zn(2+). N-linked (GlcNAc...) asparagine glycosylation is found at N60 and N96. Zn(2+) is bound at residue D158. Residue D158 is the Nucleophile of the active site. Residues N192, N222, N248, and N467 are each glycosylated (N-linked (GlcNAc...) asparagine). Residue H475 coordinates Zn(2+). N-linked (GlcNAc...) asparagine glycosylation is found at N516, N527, N589, N760, N769, N848, N872, N912, N1040, and N1057.

This sequence belongs to the glycosyl hydrolase 38 family. Zn(2+) is required as a cofactor.

It localises to the secreted. The catalysed reaction is Hydrolysis of terminal, non-reducing alpha-D-mannose residues in alpha-D-mannosides.. The protein is Alpha-mannosidase C (manC) of Dictyostelium discoideum (Social amoeba).